The chain runs to 275 residues: Elongation factor Ts (275 aa).

Lys36 participates in a covalent cross-link: Isoglutamyl lysine isopeptide (Lys-Gln) (interchain with Q-Cter in protein Pup). The tract at residues 76–79 (TDFV) is involved in Mg(2+) ion dislocation from EF-Tu.

The protein belongs to the EF-Ts family.

It localises to the cytoplasm. In terms of biological role, associates with the EF-Tu.GDP complex and induces the exchange of GDP to GTP. It remains bound to the aminoacyl-tRNA.EF-Tu.GTP complex up to the GTP hydrolysis stage on the ribosome. The polypeptide is Elongation factor Ts (Mycolicibacterium smegmatis (strain ATCC 700084 / mc(2)155) (Mycobacterium smegmatis)).